Reading from the N-terminus, the 320-residue chain is ATP-dependent 6-phosphofructokinase (320 aa).

Gly11 contacts ATP. 21 to 25 (RAVVR) contributes to the ADP binding site. ATP is bound by residues 72–73 (RC) and 102–105 (GDGS). Asp103 is a Mg(2+) binding site. 125 to 127 (TID) contributes to the substrate binding site. Asp127 acts as the Proton acceptor in catalysis. ADP is bound at residue Arg154. Residues Arg162 and 169-171 (MGR) each bind substrate. Residues 185–187 (GAE) and 214–216 (KTH) each bind ADP. Residues Glu223, Arg244, and 250 to 253 (HIQR) each bind substrate.

The protein belongs to the phosphofructokinase type A (PFKA) family. ATP-dependent PFK group I subfamily. Prokaryotic clade 'B1' sub-subfamily. In terms of assembly, homotetramer. Mg(2+) is required as a cofactor.

It is found in the cytoplasm. The catalysed reaction is beta-D-fructose 6-phosphate + ATP = beta-D-fructose 1,6-bisphosphate + ADP + H(+). The protein operates within carbohydrate degradation; glycolysis; D-glyceraldehyde 3-phosphate and glycerone phosphate from D-glucose: step 3/4. Allosterically activated by ADP and other diphosphonucleosides, and allosterically inhibited by phosphoenolpyruvate. Functionally, catalyzes the phosphorylation of D-fructose 6-phosphate to fructose 1,6-bisphosphate by ATP, the first committing step of glycolysis. The sequence is that of ATP-dependent 6-phosphofructokinase from Clostridium botulinum (strain Alaska E43 / Type E3).